We begin with the raw amino-acid sequence, 259 residues long: Leucine-rich repeat-containing protein 61 (259 aa).

LRR repeat units lie at residues Asn54 to Arg75, Gln76 to Glu97, and Asn98 to Ala119. One can recognise an LRRCT domain in the interval Asn138 to Asp178.

This is Leucine-rich repeat-containing protein 61 (Lrrc61) from Mus musculus (Mouse).